The sequence spans 244 residues: MTKKTDALYAAPLHDIIDFQFDERVVAVFPDMIQRSVPGYGMIIANIGVIAARYAQPGSHCYDLGCSLGAATLAMRQRITAPDCDIIAVDNSPAMIERARELLSLDTGLYIPVTLLCSDLQEVTIENASVVVLNFTLQFIPPPQRLALMQRIYAGLNPGGILILSEKIAFSKPEQQQLHIELHHDFKRANGYSDLEISQKRSALENVMIPETVAVHQKRLQTAGFSCAELWFQCFNFASLVAIK.

S-adenosyl-L-methionine is bound by residues Tyr-40, 65-67 (GCS), 90-91 (DN), 119-120 (DL), Asn-134, and Arg-201.

The protein belongs to the class I-like SAM-binding methyltransferase superfamily. Cx-SAM synthase family. In terms of assembly, homodimer.

It carries out the reaction prephenate + S-adenosyl-L-methionine = carboxy-S-adenosyl-L-methionine + 3-phenylpyruvate + H2O. Functionally, catalyzes the conversion of S-adenosyl-L-methionine (SAM) to carboxy-S-adenosyl-L-methionine (Cx-SAM). In Trichlorobacter lovleyi (strain ATCC BAA-1151 / DSM 17278 / SZ) (Geobacter lovleyi), this protein is Carboxy-S-adenosyl-L-methionine synthase.